Reading from the N-terminus, the 441-residue chain is Ribulose bisphosphate carboxylase large chain (441 aa).

Positions 89 and 139 each coordinate substrate. The active-site Proton acceptor is Lys141. Lys143 is a substrate binding site. Positions 167, 169, and 170 each coordinate Mg(2+). Lys167 carries the N6-carboxylysine modification. The Proton acceptor role is filled by His260. Substrate contacts are provided by Arg261, His293, and Ser345.

This sequence belongs to the RuBisCO large chain family. Type I subfamily. As to quaternary structure, heterohexadecamer of 8 large chains and 8 small chains; disulfide-linked. The disulfide link is formed within the large subunit homodimers. Mg(2+) is required as a cofactor. In terms of processing, the disulfide bond which can form in the large chain dimeric partners within the hexadecamer appears to be associated with oxidative stress and protein turnover.

The protein localises to the plastid. It is found in the chloroplast. It carries out the reaction 2 (2R)-3-phosphoglycerate + 2 H(+) = D-ribulose 1,5-bisphosphate + CO2 + H2O. The catalysed reaction is D-ribulose 1,5-bisphosphate + O2 = 2-phosphoglycolate + (2R)-3-phosphoglycerate + 2 H(+). Functionally, ruBisCO catalyzes two reactions: the carboxylation of D-ribulose 1,5-bisphosphate, the primary event in carbon dioxide fixation, as well as the oxidative fragmentation of the pentose substrate in the photorespiration process. Both reactions occur simultaneously and in competition at the same active site. The polypeptide is Ribulose bisphosphate carboxylase large chain (Polemonium reptans (Greek valerian)).